A 291-amino-acid polypeptide reads, in one-letter code: Probable xyloglucan endotransglucosylase/hydrolase protein 16 (291 aa).

An N-terminal signal peptide occupies residues 1-24; that stretch reads MGRILNRTVLMTLLVVTMAGTAFS. Positions 25-215 constitute a GH16 domain; that stretch reads GSFNEEFDLT…WSKAPFTAYY (191 aa). The active-site Nucleophile is the Glu101. Glu105 acts as the Proton donor in catalysis. A xyloglucan-binding site is contributed by Glu105. The N-linked (GlcNAc...) asparagine glycan is linked to Asn109. Xyloglucan is bound by residues 118–120, 128–130, 194–195, and Gly199; these read HTN, NRE, and DW. Cystine bridges form between Cys223-Cys232 and Cys272-Cys286. Arg277 contacts xyloglucan.

Belongs to the glycosyl hydrolase 16 family. XTH group 2 subfamily. In terms of processing, contains at least one intrachain disulfide bond essential for its enzymatic activity.

It is found in the secreted. Its subcellular location is the cell wall. The protein localises to the extracellular space. The protein resides in the apoplast. The enzyme catalyses breaks a beta-(1-&gt;4) bond in the backbone of a xyloglucan and transfers the xyloglucanyl segment on to O-4 of the non-reducing terminal glucose residue of an acceptor, which can be a xyloglucan or an oligosaccharide of xyloglucan.. In terms of biological role, catalyzes xyloglucan endohydrolysis (XEH) and/or endotransglycosylation (XET). Cleaves and religates xyloglucan polymers, an essential constituent of the primary cell wall, and thereby participates in cell wall construction of growing tissues. This Arabidopsis thaliana (Mouse-ear cress) protein is Probable xyloglucan endotransglucosylase/hydrolase protein 16 (XTH16).